Reading from the N-terminus, the 1125-residue chain is Probable inorganic carbon transporter subunit DabA (1125 aa).

Residues Cys578, Asp580, His769, and Cys784 each coordinate Zn(2+). The tract at residues 1106–1125 (SDPRPPALVEPKQTETHHAA) is disordered.

This sequence belongs to the inorganic carbon transporter (TC 9.A.2) DabA family. In terms of assembly, forms a complex with DabB. Zn(2+) serves as cofactor.

The protein localises to the cell inner membrane. Part of an energy-coupled inorganic carbon pump. The sequence is that of Probable inorganic carbon transporter subunit DabA from Nitrosococcus oceani (strain ATCC 19707 / BCRC 17464 / JCM 30415 / NCIMB 11848 / C-107).